A 231-amino-acid chain; its full sequence is Large ribosomal subunit protein uL1 (231 aa).

This sequence belongs to the universal ribosomal protein uL1 family. Part of the 50S ribosomal subunit.

Binds directly to 23S rRNA. The L1 stalk is quite mobile in the ribosome, and is involved in E site tRNA release. In terms of biological role, protein L1 is also a translational repressor protein, it controls the translation of the L11 operon by binding to its mRNA. This chain is Large ribosomal subunit protein uL1, found in Staphylococcus epidermidis (strain ATCC 35984 / DSM 28319 / BCRC 17069 / CCUG 31568 / BM 3577 / RP62A).